Consider the following 1648-residue polypeptide: Homeostatic regulator of DAG (1648 aa).

One can recognise a DMAP1-binding domain in the interval 5–101; that stretch reads IPPTLPLDLQ…YRVTTINSTS (97 aa). N-linked (GlcNAc...) asparagine glycans are attached at residues Asn28, Asn71, and Asn98. Disordered regions lie at residues 52-73 and 96-130; these read PYTPLRSPNSRKSKHLHRRNTS and TINSTSANNTPRRRSKRYTASLQSSLPGSSDENGS. Over residues 60–71 the composition is skewed to basic residues; that stretch reads NSRKSKHLHRRN. Composition is skewed to polar residues over residues 96–105 and 113–128; these read TINSTSANNT and YTASLQSSLPGSSDEN. Ser99 carries the phosphoserine modification. Asn128, Asn151, and Asn209 each carry an N-linked (GlcNAc...) asparagine glycan. The interval 158–893 is fatty acyl-AMP ligase-like domain 1; it reads AMTDSLPLIL…VEKKFLNNDL (736 aa). Residues 228–248 form a helical membrane-spanning segment; sequence VIEFTIALLGCFISGMAAVPV. Asn288, Asn328, Asn575, Asn644, and Asn730 each carry an N-linked (GlcNAc...) asparagine glycan. Phosphoserine is present on Ser751. Residues Asn881, Asn917, Asn995, and Asn1009 are each glycosylated (N-linked (GlcNAc...) asparagine). The segment at 950–1648 is fatty acyl-AMP ligase-like domain 2; that stretch reads VKPKLALQCS…LLSDYEKDNI (699 aa). The chain crosses the membrane as a helical span at residues 1061 to 1081; that stretch reads YVAMIMACLYCNLLVIPLPSV. N-linked (GlcNAc...) asparagine glycosylation occurs at Asn1198. A helical transmembrane segment spans residues 1224-1244; the sequence is GLGFMFSCLLGIYTGASTCLF. 8 N-linked (GlcNAc...) asparagine glycosylation sites follow: Asn1301, Asn1302, Asn1447, Asn1472, Asn1488, Asn1565, Asn1597, and Asn1634.

It localises to the vacuole membrane. It is found in the mitochondrion membrane. Its function is as follows. Homeostatic regulator of a chemically distinct subset of diacylglycerols (DAGs) with C36 chain length that prevents the toxic accumulation of these specific DAGs in the logarithmic growth phase, which otherwise leads to endoplasmic reticulum stress. Maintains the basal level of DAG subspecies by directly facilitating DAG to triacylglycerol (TAG) conversion process, possibly via adenylation activity of its FLD domains. Does not affect the abundant DAG species (representing over 90% of total DAG pool), comprised of C32 and C34 chain lengths. Required for vacuole fusion-mediated osmoadaptation. The chain is Homeostatic regulator of DAG from Saccharomyces cerevisiae (strain ATCC 204508 / S288c) (Baker's yeast).